The primary structure comprises 377 residues: MANKDYYELLGLQKGASDDEIKRAFRKLAVKYHPDRNQGNAEAEEKFKEINEAYQVLSDPEKKAKYDQFGSAAFDGSGGFGGGGFGGFDGFDMGGFGDIFESFFGGGGSNSRRRNGPVRGNDIEYTITLTFEEAVFGVEKEISVTRNENCEHCHGSGAEPGTNAKTCPTCSGSGQVRVQRQTPLGSFVSTSTCDTCRGTGKIIEKPCSECRGKGSVRKTRKIKVNIPAGVDTGNVMPLRGQGEHGLRGGSPGDLYVRINVTPSKVFTRKGNDVYIDAHISMPKAALGTEITVATVDGNVKYTVPPGTQSGTMFRLKGKGIQRVNSNGKGDQYVKVIVDIPKTLNKEQKEALYDFMRASGEEFDEANVPKKKLFGKNK.

A J domain is found at 5–70; that stretch reads DYYELLGLQK…EKKAKYDQFG (66 aa). Residues 137–219 form a CR-type zinc finger; that stretch reads GVEKEISVTR…CRGKGSVRKT (83 aa). Zn(2+) contacts are provided by cysteine 150, cysteine 153, cysteine 167, cysteine 170, cysteine 193, cysteine 196, cysteine 207, and cysteine 210. CXXCXGXG motif repeat units lie at residues 150-157, 167-174, 193-200, and 207-214; these read CEHCHGSG, CPTCSGSG, CDTCRGTG, and CSECRGKG.

The protein belongs to the DnaJ family. Homodimer. The cofactor is Zn(2+).

It is found in the cytoplasm. Functionally, participates actively in the response to hyperosmotic and heat shock by preventing the aggregation of stress-denatured proteins and by disaggregating proteins, also in an autonomous, DnaK-independent fashion. Unfolded proteins bind initially to DnaJ; upon interaction with the DnaJ-bound protein, DnaK hydrolyzes its bound ATP, resulting in the formation of a stable complex. GrpE releases ADP from DnaK; ATP binding to DnaK triggers the release of the substrate protein, thus completing the reaction cycle. Several rounds of ATP-dependent interactions between DnaJ, DnaK and GrpE are required for fully efficient folding. Also involved, together with DnaK and GrpE, in the DNA replication of plasmids through activation of initiation proteins. The chain is Chaperone protein DnaJ from Clostridium beijerinckii (strain ATCC 51743 / NCIMB 8052) (Clostridium acetobutylicum).